We begin with the raw amino-acid sequence, 251 residues long: CDP-diacylglycerol pyrophosphatase (251 aa).

Residues 4-24 traverse the membrane as a helical segment; the sequence is AGLLFLVMIVIAVVAAGIGYW.

The protein belongs to the Cdh family.

It is found in the cell inner membrane. It catalyses the reaction a CDP-1,2-diacyl-sn-glycerol + H2O = a 1,2-diacyl-sn-glycero-3-phosphate + CMP + 2 H(+). Its pathway is phospholipid metabolism; CDP-diacylglycerol degradation; phosphatidate from CDP-diacylglycerol: step 1/1. This is CDP-diacylglycerol pyrophosphatase from Shigella boydii serotype 4 (strain Sb227).